The following is a 571-amino-acid chain: Proline--tRNA ligase (571 aa).

It belongs to the class-II aminoacyl-tRNA synthetase family. ProS type 1 subfamily. Homodimer.

The protein localises to the cytoplasm. It catalyses the reaction tRNA(Pro) + L-proline + ATP = L-prolyl-tRNA(Pro) + AMP + diphosphate. Its function is as follows. Catalyzes the attachment of proline to tRNA(Pro) in a two-step reaction: proline is first activated by ATP to form Pro-AMP and then transferred to the acceptor end of tRNA(Pro). As ProRS can inadvertently accommodate and process non-cognate amino acids such as alanine and cysteine, to avoid such errors it has two additional distinct editing activities against alanine. One activity is designated as 'pretransfer' editing and involves the tRNA(Pro)-independent hydrolysis of activated Ala-AMP. The other activity is designated 'posttransfer' editing and involves deacylation of mischarged Ala-tRNA(Pro). The misacylated Cys-tRNA(Pro) is not edited by ProRS. This is Proline--tRNA ligase from Histophilus somni (strain 2336) (Haemophilus somnus).